The following is a 253-amino-acid chain: REF/SRPP-like protein OsI_017815 (253 aa).

Residues 1–26 (MADSGSDAPISNRPEEEVTVEKTPEM) form a disordered region. Residues 13–26 (RPEEEVTVEKTPEM) show a composition bias toward basic and acidic residues.

This sequence belongs to the REF/SRPP family.

The chain is REF/SRPP-like protein OsI_017815 from Oryza sativa subsp. indica (Rice).